Consider the following 320-residue polypeptide: Cytochrome c biogenesis protein CcsA (320 aa).

The next 7 helical transmembrane spans lie at Val14–Trp34, Gly68–Leu88, Leu101–Leu121, Val146–Met166, Thr226–Asn246, Thr260–Leu277, and Val289–Ile309.

It belongs to the CcmF/CycK/Ccl1/NrfE/CcsA family. As to quaternary structure, may interact with ccs1.

Its subcellular location is the cellular thylakoid membrane. In terms of biological role, required during biogenesis of c-type cytochromes (cytochrome c6 and cytochrome f) at the step of heme attachment. The protein is Cytochrome c biogenesis protein CcsA of Synechococcus sp. (strain WH7803).